The chain runs to 68 residues: Small cysteine-rich protein 5 (68 aa).

Residues 1-24 form the signal peptide; sequence MAVKFHLCLLLIILVGMGAHVAFA.

This sequence belongs to the Cnidaria small cysteine-rich protein (SCRiP) family. gamma subfamily. Contains 4 disulfide bonds.

It localises to the secreted. The protein resides in the nematocyst. Induces neurotoxic symptoms on zebrafish. Has also been claimed to be implied in calcification, but tests on homolog proteins suggest that proteins of this family have a neurotoxic function and not a calcification function. The sequence is that of Small cysteine-rich protein 5 from Orbicella faveolata (Mountainous star coral).